Here is a 489-residue protein sequence, read N- to C-terminus: GTPase Der (489 aa).

EngA-type G domains are found at residues 30 to 199 (PVVS…KDKP) and 227 to 403 (FRLA…SRSH). Residues 36–43 (GRQNVGKS), 85–89 (DTPGL), 151–154 (NKAD), 233–240 (GKPNSGKS), 280–284 (DTAGI), and 345–348 (NKWD) contribute to the GTP site. The KH-like domain maps to 404 to 488 (RKVSTSELNK…PIRLEFRSDR (85 aa)).

It belongs to the TRAFAC class TrmE-Era-EngA-EngB-Septin-like GTPase superfamily. EngA (Der) GTPase family. Associates with the 50S ribosomal subunit.

Its function is as follows. GTPase that plays an essential role in the late steps of ribosome biogenesis. In Leptospira interrogans serogroup Icterohaemorrhagiae serovar Lai (strain 56601), this protein is GTPase Der.